The chain runs to 222 residues: Protein THYLAKOID ASSEMBLY 8, chloroplastic (222 aa).

The transit peptide at 1–32 (MALSLSQTRPPSLSHSHTLSVIVPKRTFVSIR) directs the protein to the chloroplast. PPR repeat units follow at residues 115–149 (DLVL…DQRS) and 150–184 (DDKA…GWGS).

Belongs to the PPR family. P subfamily.

The protein resides in the plastid. It localises to the chloroplast thylakoid membrane. Functionally, essential protein required during embryogenesis. Mediates group II organellar RNA introns splicing (e.g. ycf3-2 and trnA). Binds weakly to specific RNA. Promotes the biogenesis of chloroplast thylakoid membranes. This Arabidopsis thaliana (Mouse-ear cress) protein is Protein THYLAKOID ASSEMBLY 8, chloroplastic.